The sequence spans 208 residues: Thymidylate kinase (208 aa).

10 to 17 (GGEGVGKS) contacts ATP.

Belongs to the thymidylate kinase family.

The enzyme catalyses dTMP + ATP = dTDP + ADP. Phosphorylation of dTMP to form dTDP in both de novo and salvage pathways of dTTP synthesis. This is Thymidylate kinase from Rhizorhabdus wittichii (strain DSM 6014 / CCUG 31198 / JCM 15750 / NBRC 105917 / EY 4224 / RW1) (Sphingomonas wittichii).